The sequence spans 618 residues: 1-deoxy-D-xylulose-5-phosphate synthase (618 aa).

Residues His72 and 113–115 (GHA) each bind thiamine diphosphate. Asp144 provides a ligand contact to Mg(2+). Thiamine diphosphate is bound by residues 145–146 (GA), Asn173, His284, and Glu359. Asn173 lines the Mg(2+) pocket.

Belongs to the transketolase family. DXPS subfamily. As to quaternary structure, homodimer. Mg(2+) is required as a cofactor. The cofactor is thiamine diphosphate.

The enzyme catalyses D-glyceraldehyde 3-phosphate + pyruvate + H(+) = 1-deoxy-D-xylulose 5-phosphate + CO2. Its pathway is metabolic intermediate biosynthesis; 1-deoxy-D-xylulose 5-phosphate biosynthesis; 1-deoxy-D-xylulose 5-phosphate from D-glyceraldehyde 3-phosphate and pyruvate: step 1/1. Functionally, catalyzes the acyloin condensation reaction between C atoms 2 and 3 of pyruvate and glyceraldehyde 3-phosphate to yield 1-deoxy-D-xylulose-5-phosphate (DXP). This chain is 1-deoxy-D-xylulose-5-phosphate synthase, found in Dictyoglomus turgidum (strain DSM 6724 / Z-1310).